We begin with the raw amino-acid sequence, 197 residues long: C4-dicarboxylate transport transcriptional regulatory protein DctR (197 aa).

Positions T4–I120 constitute a Response regulatory domain. 4-aspartylphosphate is present on D53. Residues A128–A135 are inter-domain linker. The region spanning V136–T197 is the HTH luxR-type domain. The H-T-H motif DNA-binding region spans N160 to S179.

Phosphorylated by DctS.

Its subcellular location is the cytoplasm. Its function is as follows. Member of the two-component regulatory system DctS/DctR involved in the transport of C4-dicarboxylates. DctR functions as a transcriptional repressor of genes for C4-dicarboxylate transport. This chain is C4-dicarboxylate transport transcriptional regulatory protein DctR (dctR), found in Rhodobacter capsulatus (Rhodopseudomonas capsulata).